We begin with the raw amino-acid sequence, 230 residues long: Orotidine 5'-phosphate decarboxylase (230 aa).

Substrate is bound by residues D11, K34, 61–70, T117, R179, Q188, G208, and R209; that span reads DLKLHDIPNT. Catalysis depends on K63, which acts as the Proton donor.

The protein belongs to the OMP decarboxylase family. Type 1 subfamily. As to quaternary structure, homodimer.

The enzyme catalyses orotidine 5'-phosphate + H(+) = UMP + CO2. It functions in the pathway pyrimidine metabolism; UMP biosynthesis via de novo pathway; UMP from orotate: step 2/2. Its function is as follows. Catalyzes the decarboxylation of orotidine 5'-monophosphate (OMP) to uridine 5'-monophosphate (UMP). This Streptococcus pyogenes serotype M28 (strain MGAS6180) protein is Orotidine 5'-phosphate decarboxylase.